Here is a 1384-residue protein sequence, read N- to C-terminus: DNA-directed RNA polymerase subunit beta'' (1384 aa).

The Zn(2+) site is built by Cys-224, Cys-297, Cys-304, and Cys-307.

Belongs to the RNA polymerase beta' chain family. RpoC2 subfamily. In plastids the minimal PEP RNA polymerase catalytic core is composed of four subunits: alpha, beta, beta', and beta''. When a (nuclear-encoded) sigma factor is associated with the core the holoenzyme is formed, which can initiate transcription. Requires Zn(2+) as cofactor.

It localises to the plastid. Its subcellular location is the chloroplast. It carries out the reaction RNA(n) + a ribonucleoside 5'-triphosphate = RNA(n+1) + diphosphate. Its function is as follows. DNA-dependent RNA polymerase catalyzes the transcription of DNA into RNA using the four ribonucleoside triphosphates as substrates. This is DNA-directed RNA polymerase subunit beta'' from Sinapis alba (White mustard).